Consider the following 313-residue polypeptide: Small glutamine-rich tetratricopeptide repeat-containing protein alpha (313 aa).

Residues 66 to 100 (ATGKEMPQDLRSPARTPPSEEDSAEAERLKTEGNE) form a disordered region. Serine 77 carries the phosphoserine modification. Threonine 81 carries the post-translational modification Phosphothreonine. A Phosphoserine modification is found at serine 84. Basic and acidic residues predominate over residues 90–100 (EAERLKTEGNE). 3 TPR repeats span residues 91-124 (AERL…NPAN), 125-158 (AVYF…DPAY), and 159-192 (SKAY…DPDN). N6-acetyllysine is present on lysine 137. Residues 250–269 (MISGGNNPLGTPGTSPSQND) are disordered. Residue serine 301 is modified to Phosphoserine. The residue at position 303 (threonine 303) is a Phosphothreonine. Phosphoserine is present on serine 305.

This sequence belongs to the SGT family. As to quaternary structure, homodimer. Homooligomer. Interacts with DNAJC5 and DNAJC5B. Interacts (via TPR repeats) with HSP90AA1. Interacts (via Gln-rich region) with SLC2A1. Interacts with HSP90AB1. Interacts (via TPR repeats) with HSPA8/Hsc70; the interaction is direct. Interacts with BAG6 (via ubiquitin-like domain); interaction prevents interaction between BAG6 and RNF126. Forms a multiprotein complex, at least composed of DNAJB12, DNAJB14, HSPA8/Hsc70 and SGTA; interaction with DNAJB14 and HSPA8/Hsc70 is direct. In terms of assembly, (Microbial infection) Interacts with Vpu and Gag from HIV-1. (Microbial infection) Interacts with SARS-CoV accessory protein 7a. As to expression, ubiquitous.

Its subcellular location is the cytoplasm. It is found in the nucleus. Functionally, co-chaperone that binds misfolded and hydrophobic patches-containing client proteins in the cytosol. Mediates their targeting to the endoplasmic reticulum but also regulates their sorting to the proteasome when targeting fails. Functions in tail-anchored/type II transmembrane proteins membrane insertion constituting with ASNA1 and the BAG6 complex a targeting module. Functions upstream of the BAG6 complex and ASNA1, binding more rapidly the transmembrane domain of newly synthesized proteins. It is also involved in the regulation of the endoplasmic reticulum-associated misfolded protein catabolic process via its interaction with BAG6: collaborates with the BAG6 complex to maintain hydrophobic substrates in non-ubiquitinated states. Competes with RNF126 for interaction with BAG6, preventing the ubiquitination of client proteins associated with the BAG6 complex. Binds directly to HSC70 and HSP70 and regulates their ATPase activity. In terms of biological role, (Microbial infection) In case of infection by polyomavirus, involved in the virus endoplasmic reticulum membrane penetration and infection via interaction with DNAJB12, DNAJB14 and HSPA8/Hsc70. The protein is Small glutamine-rich tetratricopeptide repeat-containing protein alpha (SGTA) of Homo sapiens (Human).